A 162-amino-acid polypeptide reads, in one-letter code: NADH-quinone oxidoreductase subunit I (162 aa).

4Fe-4S ferredoxin-type domains are found at residues 53–83 (LRRY…IESE) and 93–122 (TRYD…EGPN). The [4Fe-4S] cluster site is built by Cys63, Cys66, Cys69, Cys73, Cys102, Cys105, Cys108, and Cys112.

Belongs to the complex I 23 kDa subunit family. As to quaternary structure, NDH-1 is composed of 14 different subunits. Subunits NuoA, H, J, K, L, M, N constitute the membrane sector of the complex. [4Fe-4S] cluster is required as a cofactor.

Its subcellular location is the cell inner membrane. The enzyme catalyses a quinone + NADH + 5 H(+)(in) = a quinol + NAD(+) + 4 H(+)(out). In terms of biological role, NDH-1 shuttles electrons from NADH, via FMN and iron-sulfur (Fe-S) centers, to quinones in the respiratory chain. The immediate electron acceptor for the enzyme in this species is believed to be ubiquinone. Couples the redox reaction to proton translocation (for every two electrons transferred, four hydrogen ions are translocated across the cytoplasmic membrane), and thus conserves the redox energy in a proton gradient. This chain is NADH-quinone oxidoreductase subunit I, found in Erythrobacter litoralis (strain HTCC2594).